The chain runs to 249 residues: Diaminopimelate epimerase (249 aa).

The substrate site is built by asparagine 11 and asparagine 60. The active-site Proton donor is the cysteine 69. Residues 70–71, asparagine 164, and 182–183 contribute to the substrate site; these read GN and ER. The active-site Proton acceptor is the cysteine 192. 193–194 is a substrate binding site; it reads GT.

It belongs to the diaminopimelate epimerase family. As to quaternary structure, homodimer.

The protein localises to the cytoplasm. It carries out the reaction (2S,6S)-2,6-diaminopimelate = meso-2,6-diaminopimelate. Its pathway is amino-acid biosynthesis; L-lysine biosynthesis via DAP pathway; DL-2,6-diaminopimelate from LL-2,6-diaminopimelate: step 1/1. In terms of biological role, catalyzes the stereoinversion of LL-2,6-diaminopimelate (L,L-DAP) to meso-diaminopimelate (meso-DAP), a precursor of L-lysine and an essential component of the bacterial peptidoglycan. The protein is Diaminopimelate epimerase of Campylobacter jejuni subsp. jejuni serotype O:23/36 (strain 81-176).